The primary structure comprises 643 residues: Protein ecdysoneless homolog (643 aa).

Disordered regions lie at residues 428–458 (EFYNSKKERKNKGKEKQEAGSSSDANMNNFD) and 501–600 (IESM…FTPV). A compositionally biased stretch (polar residues) spans 446–456 (AGSSSDANMNN). The span at 528 to 543 (MDFDDVEDDSEGEESN) shows a compositional bias: acidic residues. Over residues 564 to 580 (NSTLEKSFENVNQQHSS) the composition is skewed to polar residues. Over residues 581 to 592 (KQNEESSKTRDE) the composition is skewed to basic and acidic residues.

Belongs to the ECD family.

In Arabidopsis thaliana (Mouse-ear cress), this protein is Protein ecdysoneless homolog.